The primary structure comprises 264 residues: MKQYLELMQKVLDEGTQKNDRTGTGTLSIFGHQMRFNLQDGFPLVTTKRCHLRSIIHELLWFLQGDTNIAYLHENNVTIWDEWADENGDLGPVYGKQWRAWPTPDGRHIDQITTVLNQLKNDPDSRRIIVSAWNVGELDKMALAPCHAFFQFYVADGKLSCQLYQRSCDVFLGLPFNIASYALLVHMMAQQCDLEVGDFVWTGGDTHLYSNHMDQTHLQLSREPRPLPKLIIKRKPESIFDYRFEDFEIEGYDPHPGIKAPVAI.

R21 contacts dUMP. A (6R)-5,10-methylene-5,6,7,8-tetrahydrofolate-binding site is contributed by H51. 126–127 serves as a coordination point for dUMP; sequence RR. Residue C146 is the Nucleophile of the active site. Residues 166-169, N177, and 207-209 contribute to the dUMP site; these read RSCD and HLY. D169 contributes to the (6R)-5,10-methylene-5,6,7,8-tetrahydrofolate binding site. A263 is a (6R)-5,10-methylene-5,6,7,8-tetrahydrofolate binding site.

It belongs to the thymidylate synthase family. Bacterial-type ThyA subfamily. Homodimer.

It localises to the cytoplasm. The enzyme catalyses dUMP + (6R)-5,10-methylene-5,6,7,8-tetrahydrofolate = 7,8-dihydrofolate + dTMP. It participates in pyrimidine metabolism; dTTP biosynthesis. Its function is as follows. Catalyzes the reductive methylation of 2'-deoxyuridine-5'-monophosphate (dUMP) to 2'-deoxythymidine-5'-monophosphate (dTMP) while utilizing 5,10-methylenetetrahydrofolate (mTHF) as the methyl donor and reductant in the reaction, yielding dihydrofolate (DHF) as a by-product. This enzymatic reaction provides an intracellular de novo source of dTMP, an essential precursor for DNA biosynthesis. The sequence is that of Thymidylate synthase from Escherichia coli (strain 55989 / EAEC).